The sequence spans 158 residues: Small ribosomal subunit protein uS15 (158 aa).

Residues 1–18 (MARMHARKRGKSGSKRPP) are compositionally biased toward basic residues. Residues 1-21 (MARMHARKRGKSGSKRPPRTA) are disordered.

This sequence belongs to the universal ribosomal protein uS15 family. In terms of assembly, part of the 30S ribosomal subunit.

The chain is Small ribosomal subunit protein uS15 from Pyrococcus horikoshii (strain ATCC 700860 / DSM 12428 / JCM 9974 / NBRC 100139 / OT-3).